The primary structure comprises 668 residues: DNA ligase (668 aa).

NAD(+) contacts are provided by residues 35 to 39 (DKEYD) and 83 to 84 (SL). Catalysis depends on K125, which acts as the N6-AMP-lysine intermediate. Residues R147, E181, and K317 each coordinate NAD(+). C410, C413, C426, and C432 together coordinate Zn(2+). Positions 591–668 (KKDNKFNGKT…TEEEFNEMIN (78 aa)) constitute a BRCT domain.

The protein belongs to the NAD-dependent DNA ligase family. LigA subfamily. The cofactor is Mg(2+). Mn(2+) serves as cofactor.

It carries out the reaction NAD(+) + (deoxyribonucleotide)n-3'-hydroxyl + 5'-phospho-(deoxyribonucleotide)m = (deoxyribonucleotide)n+m + AMP + beta-nicotinamide D-nucleotide.. DNA ligase that catalyzes the formation of phosphodiester linkages between 5'-phosphoryl and 3'-hydroxyl groups in double-stranded DNA using NAD as a coenzyme and as the energy source for the reaction. It is essential for DNA replication and repair of damaged DNA. The chain is DNA ligase from Clostridium tetani (strain Massachusetts / E88).